Here is a 351-residue protein sequence, read N- to C-terminus: Cytoplasmic dynein 2 light intermediate chain 1 (351 aa).

Residues 304-351 are disordered; that stretch reads TLKDVKDPAKDPQYAESEVDEMRIQKDQELEQYKRSSSKSWKQIELDS. Basic and acidic residues predominate over residues 323 to 337; the sequence is DEMRIQKDQELEQYK.

This sequence belongs to the dynein light intermediate chain family. Light intermediate chain of the cytoplasmic dynein complex 2, a multisubunit complex composed at least of eleven different proteins. The cytoplasmic dynein 2 complex consists of two catalytic heavy chains (HCs) and a number of non-catalytic subunits presented by intermediate chains (ICs), light intermediate chains (LICs) and light chains (LCs). Among them, a heavy chain (DYNC2H1), two intermediate chains (DYNC2I2 and DYNC2I1), a light intermediate chain (DYNC2LI1), and a light chain (DYNLT2B) are unique to the dynein-2 complex, but a subset of light chains are also shared by dynein-1 and dynein-2 complexes. Dynein-2 complex is built around two copies of cytoplasmic dynein 2 heavy chain 1 (DYNC2H1). The C-terminal region forms the motor domain, which converts the energy from ATP hydrolysis into movement. Its N-terminal region forms the tail, an extended structure that binds the other subunits and holds the two heavy chains in a homodimer. Interacts with DYNC2H1 (via N-terminus); this interaction stabilizes the dynein-2 complex structure.

Its subcellular location is the cytoplasm. The protein resides in the cell projection. It is found in the cilium. The protein localises to the cytoskeleton. It localises to the cilium basal body. Its subcellular location is the cilium axoneme. The protein resides in the microtubule organizing center. It is found in the centrosome. Acts as one of several non-catalytic accessory components of the cytoplasmic dynein 2 complex (dynein-2 complex), a motor protein complex that drives the movement of cargos along microtubules within cilia and flagella in concert with the intraflagellar transport (IFT) system, facilitating the assembly of these organelles. Involved in the regulation of ciliary length. This chain is Cytoplasmic dynein 2 light intermediate chain 1 (DYNC2LI1), found in Bos taurus (Bovine).